We begin with the raw amino-acid sequence, 297 residues long: Signal-transducing adaptor protein 1 (297 aa).

The region spanning 25-121 is the PH domain; it reads PLYFEGFLLV…WRGFILTVTE (97 aa). Phosphotyrosine is present on Tyr-170. The SH2 domain occupies 179 to 273; the sequence is ECFYAVSRKE…GNLRPFIHSA (95 aa). Residues 271–297 form a disordered region; the sequence is HSADDNFGQDPNIEDRSEKFKKNPHNA.

Interacts with URI1; the interaction is phosphorylation-dependent occurs in a growth-dependent manner. Interacts with KIT and CSF1R. Phosphorylated on tyrosine by TEC. Phosphorylated on tyrosine by KIT. Expression restricted to the bone marrow.

It localises to the nucleus. The protein localises to the cytoplasm. The protein resides in the mitochondrion. May function as an adapter molecule downstream of KIT in the proliferation or differentiation of hematopoietic stem cells. The polypeptide is Signal-transducing adaptor protein 1 (Stap1) (Mus musculus (Mouse)).